Here is a 126-residue protein sequence, read N- to C-terminus: Profilin-1B (126 aa).

The interval 2–36 (SWQTYVDTNLVGTGAVTQAAILGLDGNTWATSAGF) is actin binding. Lysine 104 carries the post-translational modification N6,N6,N6-trimethyllysine.

The protein belongs to the profilin family. Occurs in many kinds of cells as a complex with monomeric actin in a 1:1 ratio.

It localises to the cytoplasm. The protein localises to the cytoskeleton. Binds to actin and affects the structure of the cytoskeleton. At high concentrations, profilin prevents the polymerization of actin, whereas it enhances it at low concentrations. By binding to PIP2, it inhibits the formation of IP3 and DG. In Acanthamoeba castellanii (Amoeba), this protein is Profilin-1B.